The chain runs to 215 residues: Transmembrane protein 267 (215 aa).

3 helical membrane-spanning segments follow: residues 77–97, 114–134, and 178–198; these read FGEI…HFLL, FLHC…TMHF, and FWLY…VMYF.

The protein resides in the membrane. This Bos taurus (Bovine) protein is Transmembrane protein 267 (TMEM267).